Here is a 199-residue protein sequence, read N- to C-terminus: 3-isopropylmalate dehydratase small subunit (199 aa).

This sequence belongs to the LeuD family. LeuD type 1 subfamily. Heterodimer of LeuC and LeuD.

The catalysed reaction is (2R,3S)-3-isopropylmalate = (2S)-2-isopropylmalate. It functions in the pathway amino-acid biosynthesis; L-leucine biosynthesis; L-leucine from 3-methyl-2-oxobutanoate: step 2/4. Functionally, catalyzes the isomerization between 2-isopropylmalate and 3-isopropylmalate, via the formation of 2-isopropylmaleate. The protein is 3-isopropylmalate dehydratase small subunit of Mycobacteroides abscessus (strain ATCC 19977 / DSM 44196 / CCUG 20993 / CIP 104536 / JCM 13569 / NCTC 13031 / TMC 1543 / L948) (Mycobacterium abscessus).